The following is a 2602-amino-acid chain: Non-reducing polyketide synthase SAT8 (2602 aa).

The active-site Nucleophile; for transacylase activity is C130. H249 functions as the Proton donor/acceptor; for transacylase activity in the catalytic mechanism. Residues 379–398 form a disordered region; the sequence is MLENSTSPPSPAATSSNSHC. The span at 382-396 shows a compositional bias: low complexity; that stretch reads NSTSPPSPAATSSNS. The Ketosynthase family 3 (KS3) domain occupies 404–822; the sequence is PRDIAIVGMS…GSNAAMVVTQ (419 aa). Active-site for beta-ketoacyl synthase activity residues include C571, H706, and H745. The malonyl-CoA:ACP transacylase (MAT) stretch occupies residues 926–1216; sequence FGGQMSTFVG…AMARRSLDSN (291 aa). Residues 1298-1442 form an N-terminal hotdog fold region; it reads GPLFGLLTFV…GKLDLLSSSE (145 aa). The 321-residue stretch at 1298-1618 folds into the PKS/mFAS DH domain; it reads GPLFGLLTFV…YTRIPRHSMT (321 aa). Residues 1331–1616 form a product template (PT) domain region; the sequence is LVIPHIIART…IAYTRIPRHS (286 aa). Residue H1335 is the Proton acceptor; for dehydratase activity of the active site. Residues 1467-1618 are C-terminal hotdog fold; sequence GDVSGLQGRS…YTRIPRHSMT (152 aa). D1524 (proton donor; for dehydratase activity) is an active-site residue. In terms of domain architecture, Carrier spans 1658-1733; it reads DTLKQTVGQI…AFVRYISKVV (76 aa). S1692 is subject to O-(pantetheine 4'-phosphoryl)serine. Positions 1737–1772 are disordered; that stretch reads DDLGTPSHSDNDSHVTGTTATPNSSSASSDTHHGNS. Low complexity predominate over residues 1752 to 1765; the sequence is TGTTATPNSSSASS. Positions 1979-2150 are methyltransferase domain; sequence VEKVKDDFQG…GYGHVDWTDG (172 aa). The tract at residues 2229 to 2530 is NADPH-binding domain; the sequence is IVVVTGATGS…IPLGEWVRKV (302 aa).

The cofactor is pantetheine 4'-phosphate.

It participates in mycotoxin biosynthesis. Its function is as follows. Non-reducing polyketide synthase; part of the satratoxin SC1 cluster involved in the biosynthesis of satratoxins, trichothecene mycotoxins that are associated with human food poisonings. Satratoxins are suggested to be made by products of multiple gene clusters (SC1, SC2 and SC3) that encode 21 proteins in all, including polyketide synthases, acetyltransferases, and other enzymes expected to modify the trichothecene skeleton. SC1 encodes 10 proteins, SAT1 to SAT10. The largest are SAT8, which encodes a putative polyketide synthase (PKS) with a conventional non-reducing architecture, and SAT10, a putative protein containing four ankyrin repeats and thus may be involved in protein scaffolding. The putative short-chain reductase SAT3 may assist the PKS in some capacity. SAT6 contains a secretory lipase domain and acts probably as a trichothecene esterase. SAT5 encodes a putative acetyltransferase, and so, with SAT6, may affect endogenous protection from toxicity. The probable transcription factor SAT9 may regulate the expression of the SC1 cluster. SC2 encodes proteins SAT11 to SAT16, the largest of which encodes the putative reducing PKS SAT13. SAT11 is a cytochrome P450 monooxygenase, while SAT14 and SAT16 are probable acetyltransferases. The SC2 cluster may be regulated by the transcription factor SAT15. SC3 is a small cluster that encodes 5 proteins, SAT17 to SAT21. SAT21 is a putative MFS-type transporter which may have a role in exporting secondary metabolites. The four other proteins putatively encoded in SC3 include the taurine hydroxylase-like protein SAT17, the O-methyltransferase SAT18, the acetyltransferase SAT19, and the Cys6-type zinc finger SAT20, the latter being probably involved in regulation of SC3 expression. In Stachybotrys chartarum (strain CBS 109288 / IBT 7711) (Toxic black mold), this protein is Non-reducing polyketide synthase SAT8.